The following is a 398-amino-acid chain: MAKLTVKDVELKGKKVLVRVDFNVPIKDGVITNDNRITAALPTIKYILEQGGRAVLFSHLGRVKEEADKAGKSLAPVAKALSEKLGQDVVFPGTTRGAELEAAINELKDGEILLVENTRFEDIDGKKESKNDPELGKYWASLGDGIFVNDAFGTAHRAHASNVGISANVDKAVAGFLLENEIAYIQEAVEAPERPFVAILGGSKVSDKIGVIENLLSKADKVIIGGGMAYTFLKAQGYEIGTSLVEDDKLDLAKELLEKAAGKLILPLDHKVANAFAGYTEVKETADQNIPAGFMGLDVASKTIADYNTQLEGAKTVVWNGPVGVFENTDFQAGTVGLMEAIVKQPGVKSIIGGGDSAAAAINLGYADKFSWISTGGGASMELLEGKVLPGLAALTEK.

Substrate contacts are provided by residues 21 to 23, Arg36, 59 to 62, Arg119, and Arg157; these read DFN and HLGR. ATP is bound by residues Lys208, Gly296, Glu327, and 354–357; that span reads GGDS.

It belongs to the phosphoglycerate kinase family. In terms of assembly, monomer.

The protein resides in the cytoplasm. It carries out the reaction (2R)-3-phosphoglycerate + ATP = (2R)-3-phospho-glyceroyl phosphate + ADP. It participates in carbohydrate degradation; glycolysis; pyruvate from D-glyceraldehyde 3-phosphate: step 2/5. This is Phosphoglycerate kinase (pgk) from Lactococcus lactis subsp. lactis (strain IL1403) (Streptococcus lactis).